We begin with the raw amino-acid sequence, 258 residues long: UBX domain-containing protein 2A (258 aa).

Residues 1 to 14 (MKEVDNLDSIKEEW) show a composition bias toward basic and acidic residues. The segment at 1–30 (MKEVDNLDSIKEEWACETGPPDSQPLNDNQ) is disordered. Residues 1-152 (MKEVDNLDSI…SATPRIVSKA (152 aa)) form a required for interaction with CHRNA3 region. The segment at 1–165 (MKEVDNLDSI…EVDNKSTLSA (165 aa)) is required for inhibition of CHRNA3 ubiquitination and translocation of CHRNA3 to the plasma membrane resulting in an increase in acetylcholine-gated nicotinic acetylcholine receptor currents. Positions 61–125 (QVDVNIKLWK…VEDKKNEVCM (65 aa)) constitute an SEP domain. Residues 168 to 258 (LNNLEPITRI…QKTAEPFRKL (91 aa)) are required for interaction with VCP. The region spanning 170 to 247 (NLEPITRIQI…DLKNAVIIQR (78 aa)) is the UBX domain.

In terms of assembly, part of a complex composed of STUB1/CHIP, VCP/p97, CHRNA3, and UBXN2A that modulates the ubiquitination and endoplasmic reticulum-associated degradation (ERAD) of CHRNA3. Within the complex UBXN2A acts as a scaffold protein required for the interaction of CHRNA3 with VCP/p97, this interaction also inhibits CHRNA3 ubiquitination by STUB1/CHIP and subsequently ERAD. Interacts (via SEP domain) with CHRNA3 and interacts (via UBX domain) with VCP/P97; these interactions are required for the interaction of CHRNA3 with the STUB1-VCP-UBXN2A complex. Interacts with HSPA9/MOT-2 (via SBD domain); the interaction inhibits HSPA9/MOT-2 interaction with and degradation of p53, thereby promotes p53 translocation to the nucleus. Interacts with RICTOR. Ubiquitinated. In terms of tissue distribution, expressed in the prefrontal cortex (at protein level). Expressed in the habenula and hippocampus (at protein level). Expressed in peripheral ganglia.

It localises to the golgi apparatus. The protein resides in the endoplasmic reticulum. The protein localises to the perikaryon. Its subcellular location is the cell projection. It is found in the dendrite. It localises to the nucleus. The protein resides in the cytoplasm. Its function is as follows. Acts to repress the ubiquitination and subsequent endoplasmic reticulum-associated degradation of CHRNA3 by the STUB1-VCP-UBXN2A complex in cortical neurons. Also acts to promote the translocation of CHRNA3 to the plasma membrane and subsequently increases plasma membrane acetylcholine-gated ion-channel activation. Plays a role in the inhibition of STUB1-mediated TP53 degradation, via its interaction with HSPA9 which acts to inhibit TP53 binding to HSPA9. Positively mediates the ubiquitination and proteosomal degradation of RICTOR, may thereby act as a negative regulator of the mTORC2 pathway. The sequence is that of UBX domain-containing protein 2A from Mus musculus (Mouse).